The following is a 496-amino-acid chain: Lysine--tRNA ligase (496 aa).

Residues E409 and E416 each coordinate Mg(2+).

Belongs to the class-II aminoacyl-tRNA synthetase family. As to quaternary structure, homodimer. Mg(2+) is required as a cofactor.

It localises to the cytoplasm. It catalyses the reaction tRNA(Lys) + L-lysine + ATP = L-lysyl-tRNA(Lys) + AMP + diphosphate. The protein is Lysine--tRNA ligase of Streptococcus pneumoniae (strain Hungary19A-6).